Consider the following 156-residue polypeptide: Ribosome maturation factor RimP (156 aa).

Belongs to the RimP family.

Its subcellular location is the cytoplasm. In terms of biological role, required for maturation of 30S ribosomal subunits. This Bacillus cytotoxicus (strain DSM 22905 / CIP 110041 / 391-98 / NVH 391-98) protein is Ribosome maturation factor RimP.